A 1119-amino-acid polypeptide reads, in one-letter code: Transcriptional repressor NF-X1 homolog (1119 aa).

The tract at residues 1-214 (MADTEGTSSS…EPLTEEETKI (214 aa)) is disordered. Residues 7–17 (TSSSIPTSTNS) show a composition bias toward low complexity. Residues 18-29 (SRHRASRGRGGR) show a composition bias toward basic residues. Positions 84-98 (ANFTFNPNAATFNPA) are enriched in low complexity. Residues 113–128 (GASTHSNQNSRQQEPS) show a composition bias toward polar residues. Over residues 143–154 (RQLEIQEQRGDS) the composition is skewed to basic and acidic residues. Residues 157 to 167 (QNQSRQNNRNQ) show a composition bias toward low complexity. Over residues 174–193 (ANQQNKSVQNPSRNPGNSRR) the composition is skewed to polar residues. The segment covering 198-214 (RRREQKEEPLTEEETKI) has biased composition (basic and acidic residues). An RING-type; degenerate zinc finger spans residues 235 to 287 (CAICYTRITTRQGVWSCKTCYHIFHISTGCITDWARSSRDKEGANTWRCPTCQ). 9 consecutive NF-X1-type zinc fingers follow at residues 330–348 (CPHP…ECKL), 383–402 (CGQH…ECTV), 439–458 (CGIH…ECET), 500–523 (CGTP…PCNL), 565–584 (CGMH…FCLQ), 592–611 (CGIH…PCLQ), 649–668 (CDHS…PCTQ), 703–726 (CGVH…KCTK), and 735–756 (CEHP…PCKA). In terms of domain architecture, R3H spans 867–937 (IDFVKSVEKI…KRSIVLTAVR (71 aa)). 2 disordered regions span residues 1024–1047 (VDSD…PKDW) and 1078–1119 (AAKK…ELLE). Over residues 1032-1041 (NVPTTSNLVS) the composition is skewed to polar residues. The segment covering 1086–1097 (PTWEDQCDEDAP) has biased composition (acidic residues).

Belongs to the NFX1 family.

The protein localises to the nucleus. Its function is as follows. May play a role in transcription regulation. In Caenorhabditis elegans, this protein is Transcriptional repressor NF-X1 homolog (nfx-1).